Reading from the N-terminus, the 1256-residue chain is Topoisomerase 1-associated factor 1 (1256 aa).

Residues 26–38 (GFIVSDEENDNLE) are compositionally biased toward acidic residues. 4 disordered regions span residues 26–58 (GFIV…VDEY), 695–725 (SKKK…RTHA), 1052–1121 (SGAE…EAFF), and 1176–1256 (SDGV…DEDE). Over residues 39 to 53 (NENRNERDPDSRNQD) the composition is skewed to basic and acidic residues. A compositionally biased stretch (basic residues) spans 1060–1086 (GKARKRGNKSSSTIKKKSLQSRSRRPP). Composition is skewed to basic and acidic residues over residues 1097-1110 (ELRK…FVHD) and 1179-1190 (VDTHSHQDDKSQ). The segment covering 1194-1204 (SENEDSSEEVS) has biased composition (acidic residues). The span at 1222–1231 (DNNVSENYVS) shows a compositional bias: low complexity.

The protein belongs to the timeless family. As to quaternary structure, component of the fork protection complex (FPC) consisting of TOF1 and CSM3.

The protein localises to the nucleus. Its function is as follows. Forms a fork protection complex (FPC) with CSM3 and which is required for chromosome segregation during meiosis and DNA damage repair. FPC coordinates leading and lagging strand synthesis and moves with the replication fork. FPC stabilizes replication forks in a configuration that is recognized by replication checkpoint sensors. The polypeptide is Topoisomerase 1-associated factor 1 (TOF1) (Scheffersomyces stipitis (strain ATCC 58785 / CBS 6054 / NBRC 10063 / NRRL Y-11545) (Yeast)).